Reading from the N-terminus, the 1670-residue chain is Hemolymph clottable protein (1670 aa).

Positions 1–14 (MKALILLLLGACQA) are cleaved as a signal peptide. Residues 15 to 674 (LQPGLEYQYR…FANFVTTTIY (660 aa)) are vittelogenin. One can recognise a Vitellogenin domain in the interval 15–764 (LQPGLEYQYR…LKIDGQQRGL (750 aa)). The N-linked (GlcNAc...) asparagine glycan is linked to Asn106. Low complexity predominate over residues 198-231 (SSYTTKTKSKTSSKTSSKTSSKTSSKTSKTGKTS). The segment at 198–236 (SSYTTKTKSKTSSKTSSKTSSKTSSKTSKTGKTSPGQLA) is disordered. Asn319, Asn459, and Asn1301 each carry an N-linked (GlcNAc...) asparagine glycan. Positions 1390–1550 (VSCTIDETKV…SWASPGEGCA (161 aa)) constitute a VWFD domain. Cystine bridges form between Cys1392–Cys1513 and Cys1414–Cys1549.

Homodimer; disulfide-linked. Also exists as oligomers. Post-translationally, glycosylated. Contains mannose and N-acetylglucosamine. In terms of processing, substrate of transglutaminase. In terms of tissue distribution, widely expressed with highest levels in gill and heart. Not expressed in hemocytes.

The protein localises to the secreted. Forms stable clots in the presence of calcium. This Penaeus monodon (Giant tiger prawn) protein is Hemolymph clottable protein.